The primary structure comprises 213 residues: Octanoyltransferase (213 aa).

In terms of domain architecture, BPL/LPL catalytic spans 32–207 (DHTPDEIWLV…KLLALLNNPP (176 aa)). Substrate contacts are provided by residues 71–78 (RGGQVTYH), 138–140 (SLG), and 151–153 (GLA). Residue C169 is the Acyl-thioester intermediate of the active site.

The protein belongs to the LipB family.

It localises to the cytoplasm. The catalysed reaction is octanoyl-[ACP] + L-lysyl-[protein] = N(6)-octanoyl-L-lysyl-[protein] + holo-[ACP] + H(+). The protein operates within protein modification; protein lipoylation via endogenous pathway; protein N(6)-(lipoyl)lysine from octanoyl-[acyl-carrier-protein]: step 1/2. Catalyzes the transfer of endogenously produced octanoic acid from octanoyl-acyl-carrier-protein onto the lipoyl domains of lipoate-dependent enzymes. Lipoyl-ACP can also act as a substrate although octanoyl-ACP is likely to be the physiological substrate. The chain is Octanoyltransferase from Enterobacter sp. (strain 638).